The following is an 818-amino-acid chain: Dipeptidyl-peptidase 7 (818 aa).

A signal peptide spans 1–22 (MKLKRILLSVALLCGIGTTAMA). Residues His87, Asp223, and Ser645 each act as charge relay system in the active site.

This sequence belongs to the peptidase S46 family.

Catalyzes the removal of dipeptides from the N-terminus of oligopeptides. Most efficiently cleaves the synthetic substrate Met-Leu-methylcoumaryl-7-amide (Met-Leu-MCA), and slowly hydrolyzes Leu-Gln-, Lys-Ala-, Leu-Arg, and Ala-Asn-MCA. Is likely involved in amino acid metabolism and bacterial growth/survival of asaccharolytic P.endodontalis, that utilizes amino acids from extracellular proteinaceous nutrients as energy and carbon sources. The polypeptide is Dipeptidyl-peptidase 7 (Porphyromonas endodontalis (strain ATCC 35406 / DSM 24491 / JCM 8526 / CCUG 16442 / BCRC 14492 / NCTC 13058 / HG 370) (Bacteroides endodontalis)).